The sequence spans 449 residues: MNPNQKIITIGSICMVTGIVSLMLQIGNMISIWVSHSIHTGNQHQSEPISNTNFLTEKAVASVKLAGNSSLCPINGWAVYSKDNSIRIGSKGDVFVIREPFISCSHLECRTFFLTQGALLNDKHSNGTVKDRSPHRTLMSCPVGEAPSPYNSRFESVAWSASACHDGTSWLTIGISGPDNGAVAVLKYNGIITDTIKSWRNNILRTQESECACVNGSCFTVMTDGPSNGQASHKIFKMEKGKVVKSVELDAPNYHYEECSCYPNAGEITCVCRDNWHGSNRPWVSFNQNLEYQIGYICSGVFGDNPRPNDGTGSCGPVSSNGAYGVKGFSFKYGNGVWIGRTKSTNSRSGFEMIWDPNGWTETDSSFSVKQDIVAITDWSGYSGSFVQHPELTGLDCIRPCFWVELIRGRPKESTIWTSGSSISFCGVNSDTVGWSWPDGAELPFTIDK.

Topologically, residues 1-6 are intravirion; sequence MNPNQK. Residues 7–34 form a helical membrane-spanning segment; sequence IITIGSICMVTGIVSLMLQIGNMISIWV. The involved in apical transport and lipid raft association stretch occupies residues 11–33; that stretch reads GSICMVTGIVSLMLQIGNMISIW. At 35–449 the chain is on the virion surface side; the sequence is SHSIHTGNQH…GAELPFTIDK (415 aa). A hypervariable stalk region region spans residues 36–70; that stretch reads HSIHTGNQHQSEPISNTNFLTEKAVASVKLAGNSS. A head of neuraminidase region spans residues 71-449; it reads LCPINGWAVY…GAELPFTIDK (379 aa). 8 disulfides stabilise this stretch: C72-C397, C104-C109, C164-C211, C213-C218, C259-C272, C261-C270, C298-C315, and C401-C426. A substrate-binding site is contributed by R98. The active-site Proton donor/acceptor is the D131. R132 serves as a coordination point for substrate. 257–258 is a binding site for substrate; the sequence is EE. R273 provides a ligand contact to substrate. Positions 274, 278, 304, 322, and 324 each coordinate Ca(2+). R348 serves as a coordination point for substrate. Y382 (nucleophile) is an active-site residue.

Belongs to the glycosyl hydrolase 34 family. As to quaternary structure, homotetramer. Ca(2+) serves as cofactor. Post-translationally, N-glycosylated.

Its subcellular location is the virion membrane. The protein localises to the host apical cell membrane. The catalysed reaction is Hydrolysis of alpha-(2-&gt;3)-, alpha-(2-&gt;6)-, alpha-(2-&gt;8)- glycosidic linkages of terminal sialic acid residues in oligosaccharides, glycoproteins, glycolipids, colominic acid and synthetic substrates.. Inhibited by the neuraminidase inhibitors zanamivir (Relenza) and oseltamivir (Tamiflu). These drugs interfere with the release of progeny virus from infected cells and are effective against all influenza strains. Resistance to neuraminidase inhibitors is quite rare. Its function is as follows. Catalyzes the removal of terminal sialic acid residues from viral and cellular glycoconjugates. Cleaves off the terminal sialic acids on the glycosylated HA during virus budding to facilitate virus release. Additionally helps virus spread through the circulation by further removing sialic acids from the cell surface. These cleavages prevent self-aggregation and ensure the efficient spread of the progeny virus from cell to cell. Otherwise, infection would be limited to one round of replication. Described as a receptor-destroying enzyme because it cleaves a terminal sialic acid from the cellular receptors. May facilitate viral invasion of the upper airways by cleaving the sialic acid moities on the mucin of the airway epithelial cells. Likely to plays a role in the budding process through its association with lipid rafts during intracellular transport. May additionally display a raft-association independent effect on budding. Plays a role in the determination of host range restriction on replication and virulence. Sialidase activity in late endosome/lysosome traffic seems to enhance virus replication. The protein is Neuraminidase of Influenza A virus (strain A/Vietnam/1203/2004 H5N1).